We begin with the raw amino-acid sequence, 513 residues long: ATP synthase subunit alpha, mitochondrial (513 aa).

170–177 contributes to the ATP binding site; it reads GDRQTGKT.

It belongs to the ATPase alpha/beta chains family. In terms of assembly, F-type ATPases have 2 components, CF(1) - the catalytic core - and CF(0) - the membrane proton channel. CF(1) has five subunits: alpha(3), beta(3), gamma(1), delta(1), epsilon(1). CF(0) has three main subunits: a, b and c.

The protein localises to the mitochondrion. It is found in the mitochondrion inner membrane. Its function is as follows. Mitochondrial membrane ATP synthase (F(1)F(0) ATP synthase or Complex V) produces ATP from ADP in the presence of a proton gradient across the membrane which is generated by electron transport complexes of the respiratory chain. F-type ATPases consist of two structural domains, F(1) - containing the extramembraneous catalytic core, and F(0) - containing the membrane proton channel, linked together by a central stalk and a peripheral stalk. During catalysis, ATP synthesis in the catalytic domain of F(1) is coupled via a rotary mechanism of the central stalk subunits to proton translocation. Subunits alpha and beta form the catalytic core in F(1). Rotation of the central stalk against the surrounding alpha(3)beta(3) subunits leads to hydrolysis of ATP in three separate catalytic sites on the beta subunits. Subunit alpha does not bear the catalytic high-affinity ATP-binding sites. The chain is ATP synthase subunit alpha, mitochondrial (ATPA) from Marchantia polymorpha (Common liverwort).